The sequence spans 307 residues: Reaction center protein M chain (307 aa).

Alanine 2 carries the blocked amino end (Ala) modification. 3 helical membrane-spanning segments follow: residues 45 to 69 (FWNA…FAQV), 103 to 123 (GWWL…YMHI), and 133 to 153 (KPYL…IYII). Histidine 192 contacts (7R,8Z)-bacteriochlorophyll b. A helical membrane pass occupies residues 196 to 216 (IFFLLGSTLLLAMHAGTIWAL). Residues histidine 209, glutamate 236, and histidine 256 each coordinate Fe cation. A helical transmembrane segment spans residues 257 to 277 (LWAFWFAWLCGITGALGVFFS).

This sequence belongs to the reaction center PufL/M/PsbA/D family. In terms of assembly, reaction center is composed of four bacteriochlorophylls, two bacteriopheophytins, two ubiquinones, one iron, and two highly hydrophobic polypeptide chains (designated L and M).

The protein localises to the cell membrane. The reaction center is a membrane-bound complex that mediates the initial photochemical event in the electron transfer process of photosynthesis. The chain is Reaction center protein M chain (pufM) from Chloroflexus aurantiacus (strain ATCC 29366 / DSM 635 / J-10-fl).